The following is a 258-amino-acid chain: Phosphate import ATP-binding protein PstB 3 (258 aa).

The ABC transporter domain occupies 10–253 (MTARSLAVHY…PANSLTQGYI (244 aa)). 42–49 (GPSGCGKS) contacts ATP.

It belongs to the ABC transporter superfamily. Phosphate importer (TC 3.A.1.7) family. As to quaternary structure, the complex is composed of two ATP-binding proteins (PstB), two transmembrane proteins (PstC and PstA) and a solute-binding protein (PstS).

The protein resides in the cell inner membrane. It carries out the reaction phosphate(out) + ATP + H2O = ADP + 2 phosphate(in) + H(+). Functionally, part of the ABC transporter complex PstSACB involved in phosphate import. Responsible for energy coupling to the transport system. The sequence is that of Phosphate import ATP-binding protein PstB 3 from Paramagnetospirillum magneticum (strain ATCC 700264 / AMB-1) (Magnetospirillum magneticum).